Reading from the N-terminus, the 404-residue chain is uncharacterized protein (404 aa).

11 helical membrane-spanning segments follow: residues 15–35, 43–63, 84–104, 121–141, 154–174, 187–207, 231–251, 279–299, 316–336, 338–358, and 373–393; these read WSLLMGAAFLMATSAIGPGFL, NTLAASFGFVILISIILDIFA, MVLPGLGYFIAILVVLGGLAF, GITPETGALISAVIAILIFVI, IAGFVMIILTVYVAATTAPPV, ISIFAIVTLVGGTVGGYITFA, VVGILITSVMRIALFLAVLGV, IFGLIMWSAAITSVIGAAYTS, GIIIGFIVVSTLAFVTIGQPA, ILVLVGSLNGLILPIALGTLL, and PLWLTSTGALVVIVMAVMGIY.

It belongs to the NRAMP family.

The protein resides in the cell membrane. This is an uncharacterized protein from Bacillus subtilis (strain 168).